We begin with the raw amino-acid sequence, 916 residues long: MVQKESQAALEERESERNANPAAASGASLEQSVAPAPGEDNPSGAGAAAVVGAAGGARRFLCGVVEGFYGRPWVMEQRKELFRRLQKWELNTYLYAPKDDYKHRMFWREMYSVEEAEQLMTLISAAREYEIEFIYAISPGLDITFSNPKEVSTLKRKLDQVSQFGCRSFALLFDDIDHNMCAADKEVFSSFAHAQVSITNEIYQYLGEPETFLFCPTEYCGTFCYPNVSQSPYLRTVGEKLLPGIEVLWTGPKVVSKEIPVESIEEVSKIIKRAPVIWDNIHANDYDQKRLFLGPYKGRSTELIPRLKGVLTNPNCEFEANYVAIHTLATWYKSNMNGVRKDVVMTDSEDSTVSIQIKLENEGSDEDIETDVLYSPQMALKLALTEWLQEFGVPHQYSSRQVAHSGAKTSVVDGTPLVAAPSLNATTVVTTVYQEPIMSQGAALSGEPSVLTKEEEKKQPDEEPMDMVVEKQEEAEHKNDNQILTEIVEAKMAEELRPMDTDKESMAESKSPEMSMQEDCIPDVAPMQTDEQTQKEQFVPGPNEKPLYTAEPVTLEDLQLLADLFYLPYEHGPKGAQMLREFQWLRANSSVVSVNCKGKDSEKIEEWRSRAAKFEEMCALVMGMFTRLSNCANRTILYDMYSYVWDIKSIMSMVKSFVQWLGCRSHSSAQFLIGDQEPWAFRGGLAGEFQRLLPIDGANDLFFQPPPLTPTSKVYTIRPYFPKDEASVYKICREMYDDGVGFPFQSQPDLIGDKLVGGLLSLSLDYCFVLEDEDGICGYALGTVDVTPFIKKCKISWIPFMQEKYTKPNGDKELSEAEKIMLSFHEEQEVLPETFLANFPSLIKMDIHKKVTDPSVAKSMMACLLSSLKANGSRGAFCEVRPDDKRILEFYSKLGCFEIAKMEGFPKDVVILGRSL.

The interval methionine 1 to glycine 46 is disordered. The region spanning phenylalanine 60–methionine 336 is the GH84 domain. A protein contacts are provided by glycine 67, lysine 98, and aspartate 174. Residue aspartate 175 is the Proton donor of the active site. Residues tyrosine 219, tryptophan 278–asparagine 280, aspartate 285, and asparagine 313 each bind a protein. Serine 364 is subject to Phosphoserine. Positions alanine 443–methionine 465 are disordered. Residues threonine 452–aspartate 461 show a composition bias toward basic and acidic residues.

Belongs to the glycosyl hydrolase 84 family. Monomer. Interacts with CLOCK. Post-translationally, proteolytically cleaved by caspase-3 during apoptosis. The fragments interact with each other; cleavage does not decrease enzyme activity.

The protein resides in the cytoplasm. It is found in the nucleus. The catalysed reaction is 3-O-(N-acetyl-beta-D-glucosaminyl)-L-seryl-[protein] + H2O = N-acetyl-D-glucosamine + L-seryl-[protein]. The enzyme catalyses 3-O-(N-acetyl-beta-D-glucosaminyl)-L-threonyl-[protein] + H2O = L-threonyl-[protein] + N-acetyl-D-glucosamine. Functionally, cleaves GlcNAc but not GalNAc from O-glycosylated proteins. Deglycosylates a large and diverse number of proteins, such as CRYAB, ELK1, GSDMD, LMNB1 and TAB1. Can use p-nitrophenyl-beta-GlcNAc and 4-methylumbelliferone-GlcNAc as substrates but not p-nitrophenyl-beta-GalNAc or p-nitrophenyl-alpha-GlcNAc (in vitro). Does not bind acetyl-CoA and does not have histone acetyltransferase activity. This Mus musculus (Mouse) protein is Protein O-GlcNAcase.